A 144-amino-acid chain; its full sequence is Putative pre-16S rRNA nuclease (144 aa).

It belongs to the YqgF nuclease family.

Its subcellular location is the cytoplasm. In terms of biological role, could be a nuclease involved in processing of the 5'-end of pre-16S rRNA. The protein is Putative pre-16S rRNA nuclease of Chlorobium phaeobacteroides (strain BS1).